A 364-amino-acid polypeptide reads, in one-letter code: Flagellar P-ring protein (364 aa).

Positions 1-21 (MNVFKVFCLMVLLGWQLPAMA) are cleaved as a signal peptide.

Belongs to the FlgI family. In terms of assembly, the basal body constitutes a major portion of the flagellar organelle and consists of four rings (L,P,S, and M) mounted on a central rod.

It localises to the periplasm. Its subcellular location is the bacterial flagellum basal body. Assembles around the rod to form the L-ring and probably protects the motor/basal body from shearing forces during rotation. This chain is Flagellar P-ring protein, found in Pseudoalteromonas translucida (strain TAC 125).